Here is a 485-residue protein sequence, read N- to C-terminus: 3-isopropylmalate dehydratase large subunit (485 aa).

Disordered regions lie at residues Met-1–Gly-20 and Pro-73–Pro-92. Residues Cys-364, Cys-424, and Cys-427 each contribute to the [4Fe-4S] cluster site.

The protein belongs to the aconitase/IPM isomerase family. LeuC type 1 subfamily. Heterodimer of LeuC and LeuD. [4Fe-4S] cluster is required as a cofactor.

The enzyme catalyses (2R,3S)-3-isopropylmalate = (2S)-2-isopropylmalate. It functions in the pathway amino-acid biosynthesis; L-leucine biosynthesis; L-leucine from 3-methyl-2-oxobutanoate: step 2/4. Functionally, catalyzes the isomerization between 2-isopropylmalate and 3-isopropylmalate, via the formation of 2-isopropylmaleate. In Rhodopirellula baltica (strain DSM 10527 / NCIMB 13988 / SH1), this protein is 3-isopropylmalate dehydratase large subunit.